The primary structure comprises 1379 residues: DNA-directed RNA polymerase subunit beta (1379 aa).

It belongs to the RNA polymerase beta chain family. The RNAP catalytic core consists of 2 alpha, 1 beta, 1 beta' and 1 omega subunit. When a sigma factor is associated with the core the holoenzyme is formed, which can initiate transcription.

It catalyses the reaction RNA(n) + a ribonucleoside 5'-triphosphate = RNA(n+1) + diphosphate. In terms of biological role, DNA-dependent RNA polymerase catalyzes the transcription of DNA into RNA using the four ribonucleoside triphosphates as substrates. This chain is DNA-directed RNA polymerase subunit beta, found in Rhizobium leguminosarum bv. trifolii (strain WSM2304).